The following is a 733-amino-acid chain: Hypermethylated in cancer 1 protein (733 aa).

One can recognise a BTB domain in the interval 47 to 110 (CDVIIVVQNA…IYTGRLADGA (64 aa)). Positions 154 to 315 (KYCHLRGGGG…PFRGGSGSPG (162 aa)) are mediates HDAC-dependent transcriptional repression. Residue arginine 159 is modified to Omega-N-methylarginine. The segment at 189-209 (YPSPVGPPPPPAAEPPSGPEA) is disordered. Residues 192–206 (PVGPPPPPAAEPPSG) are compositionally biased toward pro residues. Residue serine 237 is modified to Phosphoserine. Residues 241–247 (GLDLSKK) are interaction with CTBP1. The tract at residues 241 to 421 (GLDLSKKSPP…PGGHLEGYPC (181 aa)) is disordered. Serine 248 is modified (phosphoserine). Positions 284 to 293 (LALPSLPPLP) are enriched in pro residues. Position 333 is an N6-acetyllysine; alternate (lysine 333). Residue lysine 333 forms a Glycyl lysine isopeptide (Lys-Gly) (interchain with G-Cter in SUMO); alternate linkage. Basic and acidic residues predominate over residues 344 to 361 (ELGRERGSPSERCEERGG). Residue serine 366 is modified to Phosphoserine. The span at 368–380 (GGPPLGLAPPPRY) shows a compositional bias: pro residues. 5 consecutive C2H2-type zinc fingers follow at residues 439-459 (CIPCGKGFPSSEQLNAHVEAH), 509-529 (CASCDKSYKDPATLRQHEKTH), 537-557 (CTICGKKFTQRGTMTRHMRSH), 565-585 (CDACGMRFTRQYRLTEHMRIH), and 593-613 (CQVCGGKFAQQRNLISHMKMH). Serine 704 is modified (phosphoserine).

This sequence belongs to the krueppel C2H2-type zinc-finger protein family. Hic subfamily. As to quaternary structure, self-associates. Interacts with HIC2. Interacts with CTBP1 and CTBP2. Interacts with TCF7L2 and ARID1A. Interacts with MTA1 and MBD3; indicative for an association with the NuRD complex. Interacts with SIRT1. Acetylated on several residues, including Lys-333. Lys-333 is deacetylated by SIRT1. Post-translationally, sumoylated on Lys-333 by a PIAS family member, which enhances interaction with MTA1, positively regulates transcriptional repression activity and is enhanced by HDAC4. Ubiquitously expressed with highest levels found in lung, colon, prostate, thymus, testis and ovary. Expression is absent or decreased in many tumor cells.

The protein resides in the nucleus. Functionally, transcriptional repressor. Recognizes and binds to the consensus sequence '5-[CG]NG[CG]GGGCA[CA]CC-3'. May act as a tumor suppressor. Involved in development of head, face, limbs and ventral body wall. Involved in down-regulation of SIRT1 and thereby is involved in regulation of p53/TP53-dependent apoptotic DNA-damage responses. The specific target gene promoter association seems to be depend on corepressors, such as CTBP1 or CTBP2 and MTA1. In cooperation with MTA1 (indicative for an association with the NuRD complex) represses transcription from CCND1/cyclin-D1 and CDKN1C/p57Kip2 specifically in quiescent cells. Involved in regulation of the Wnt signaling pathway probably by association with TCF7L2 and preventing TCF7L2 and CTNNB1 association with promoters of TCF-responsive genes. Seems to repress transcription from E2F1 and ATOH1 which involves ARID1A, indicative for the participation of a distinct SWI/SNF-type chromatin-remodeling complex. Probably represses transcription of ACKR3, FGFBP1 and EFNA1. The polypeptide is Hypermethylated in cancer 1 protein (HIC1) (Homo sapiens (Human)).